Reading from the N-terminus, the 382-residue chain is Threonine synthase (382 aa).

The residue at position 93 (lysine 93) is an N6-(pyridoxal phosphate)lysine. Residues asparagine 119, 219-223 (GNAGN), and threonine 347 each bind pyridoxal 5'-phosphate.

It belongs to the threonine synthase family. Pyridoxal 5'-phosphate serves as cofactor.

The catalysed reaction is O-phospho-L-homoserine + H2O = L-threonine + phosphate. Its pathway is amino-acid biosynthesis; L-threonine biosynthesis; L-threonine from L-aspartate: step 5/5. In terms of biological role, catalyzes the gamma-elimination of phosphate from L-phosphohomoserine and the beta-addition of water to produce L-threonine. The protein is Threonine synthase (thrC) of Synechocystis sp. (strain ATCC 27184 / PCC 6803 / Kazusa).